Reading from the N-terminus, the 1112-residue chain is Mediator of RNA polymerase II transcription subunit 14 (1112 aa).

3 disordered regions span residues 1–76 (MPGV…INES), 120–141 (SPHG…QSPE), and 1088–1112 (TNSA…ITID). The span at 20–39 (SPDNVSSTPFPQERVNQSGD) shows a compositional bias: polar residues. The span at 64-73 (IETHTGKDGI) shows a compositional bias: basic and acidic residues. A compositionally biased stretch (polar residues) spans 1088–1099 (TNSAGARSSQQC).

This sequence belongs to the Mediator complex subunit 14 family. As to quaternary structure, component of the Mediator complex.

Its subcellular location is the nucleus. Its function is as follows. Component of the Mediator complex, a coactivator involved in the regulated transcription of nearly all RNA polymerase II-dependent genes. Mediator functions as a bridge to convey information from gene-specific regulatory proteins to the basal RNA polymerase II transcription machinery. Mediator is recruited to promoters by direct interactions with regulatory proteins and serves as a scaffold for the assembly of a functional preinitiation complex with RNA polymerase II and the general transcription factors. In Aspergillus clavatus (strain ATCC 1007 / CBS 513.65 / DSM 816 / NCTC 3887 / NRRL 1 / QM 1276 / 107), this protein is Mediator of RNA polymerase II transcription subunit 14 (rgr1).